Consider the following 125-residue polypeptide: Multifunctional methyltransferase subunit TRM112-like protein (125 aa).

One can recognise a TRM112 domain in the interval 2-119; that stretch reads KLLTHNLLSS…SRGIPNMLLN (118 aa).

This sequence belongs to the TRM112 family. As to quaternary structure, part of the heterodimeric BUD23-TRM112 methyltransferase complex; this heterodimerization is necessary for the metabolic stability and activity of the catalytic subunit BUD23. Part of the heterodimeric N6AMT1-TRM112 methyltransferase complex; this heterodimerization is necessary for S-adenosyl-L-methionine-binding to N6AMT1/HEMK2. Part of the heterodimeric ALKBH8-TRM112 methyltransferase complex. Part of the heterodimeric METTL5-TRM112 methyltransferase complex; this heterodimerization is necessary for the stability of the catalytic subunit METTL5. Part of the heterodimeric THUMPD3-TRM112 methyltransferase complex; this complex forms an active tRNA methyltransferase, where TRMT112 acts as an activator of the catalytic subunit THUMPD3. Part of the heterodimeric THUMPD2-TRM112 methyltransferase complex; this complex forms an active tRNA methyltransferase, where TRMT112 acts as an activator of the catalytic subunit THUMPD2. Part of the heterodimeric TRMT11-TRM112 methyltransferase complex; this complex forms an active tRNA methyltransferase, where TRMT112 acts as an activator of the catalytic subunit TRMT11. In terms of tissue distribution, abundantly expressed in the testis, also expressed in the brain, heart, kidney, liver, lung, muscle and spleen.

Its subcellular location is the nucleus. It localises to the nucleoplasm. The protein localises to the cytoplasm. The protein resides in the perinuclear region. In terms of biological role, acts as an activator of both rRNA/tRNA and protein methyltransferases. Together with methyltransferase BUD23, methylates the N(7) position of a guanine in 18S rRNA. The heterodimer with HEMK2/N6AMT1 catalyzes N5-methylation of ETF1 on 'Gln-185', using S-adenosyl L-methionine as methyl donor. The heterodimer with ALKBH8 catalyzes the methylation of 5-carboxymethyl uridine to 5-methylcarboxymethyl uridine at the wobble position of the anticodon loop in target tRNA species. Together with methyltransferase THUMPD3, catalyzes the formation of N(2)-methylguanosine at position 6 in a broad range of tRNA substrates and at position 7 of tRNA(Trp). Involved in the pre-rRNA processing steps leading to small-subunit rRNA production. Together with methyltransferase METTL5, specifically methylates the 6th position of adenine in position 1832 of 18S rRNA. This chain is Multifunctional methyltransferase subunit TRM112-like protein (Trmt112), found in Mus musculus (Mouse).